We begin with the raw amino-acid sequence, 419 residues long: MQNSHLSQQRFSDLALHRIVQQAIKEKGFEFCTPIQALSLPITLKGQDIAGQAQTGTGKTIAFLTATFHHLLQKNNINSSEQPRALILAPTRELVVQIANDANFLVQATGLKTGLAYGGEGYDKQLKVIDRGIDILIGTTGRVIDYVKQGIIRLDYIQVVVLDEADRMFDLGFIRDIRYLLRKCPVPQQRLTMLFSATLSYKVRELAFEHMNDPQYVEIEPLQKTGHRIREELFYPSNQDKMALLMTLLEEEWPERCIIFSNTKHRCEEIWGYLSADGHRVGLLTGDVMQKKRLSLLKQFTDGTLDVLVATDVAARGLHIPDVTHVFNYDLPDDCEDYVHRIGRTGRAGESGISISFACEEYAINLPAIEEYIGHSIPVSQYDAKALIEDLPTPHRIKRGAFDSRSNLQRTVKRLKKTY.

Residues 9-37 (QRFSDLALHRIVQQAIKEKGFEFCTPIQA) carry the Q motif motif. The region spanning 40 to 217 (LPITLKGQDI…FEHMNDPQYV (178 aa)) is the Helicase ATP-binding domain. Residue 53–60 (AQTGTGKT) participates in ATP binding. Positions 163–166 (DEAD) match the DEAD box motif. The Helicase C-terminal domain occupies 241–388 (KMALLMTLLE…VSQYDAKALI (148 aa)).

It belongs to the DEAD box helicase family. RhlB subfamily. As to quaternary structure, component of the RNA degradosome, which is a multiprotein complex involved in RNA processing and mRNA degradation.

It localises to the cytoplasm. The enzyme catalyses ATP + H2O = ADP + phosphate + H(+). DEAD-box RNA helicase involved in RNA degradation. Has RNA-dependent ATPase activity and unwinds double-stranded RNA. This is ATP-dependent RNA helicase RhlB from Histophilus somni (strain 2336) (Haemophilus somnus).